Reading from the N-terminus, the 514-residue chain is Glucose-1-phosphate adenylyltransferase small subunit 2, chloroplastic/amyloplastic/cytosolic (514 aa).

A chloroplast-targeting transit peptide spans 1-64 (MAMAAAMGVA…RRRPLVFSPR (64 aa)). The segment at 35–74 (RPRRPRGVASSSSSSSSAGRRRRPLVFSPRAVSDSKSSQT) is disordered. A compositionally biased stretch (low complexity) spans 41 to 52 (GVASSSSSSSSA).

This sequence belongs to the bacterial/plant glucose-1-phosphate adenylyltransferase family. As to quaternary structure, heterotetramer composed of two small and two large subunits. Expressed in leaves.

It is found in the plastid. The protein localises to the chloroplast. Its subcellular location is the amyloplast. The protein resides in the cytoplasm. It localises to the cytosol. The enzyme catalyses alpha-D-glucose 1-phosphate + ATP + H(+) = ADP-alpha-D-glucose + diphosphate. The protein operates within glycan biosynthesis; starch biosynthesis. With respect to regulation, activated by 3'phosphoglycerate, inhibited by orthophosphate. Allosteric regulation. Inhibited by inorganic phosphate (Pi). In terms of biological role, involved in synthesis of starch. Catalyzes the synthesis of ADP-glucose, a molecule that serves as an activated glycosyl donor for alpha-1,4-glucan synthesis. The chloroplastic isoform 1 is essential for starch synthesis in leaf chloroplasts and the cytosolic isoform 2 for synthesis in seed endosperm. In Oryza sativa subsp. japonica (Rice), this protein is Glucose-1-phosphate adenylyltransferase small subunit 2, chloroplastic/amyloplastic/cytosolic.